A 338-amino-acid chain; its full sequence is MDKGKKVETVEKQENSLPWVEKYRPTTLDEVAGHEGVITTIKKFVEEGKLPHLLFHGPPGTGKTTTIIAVARQIYGKNYRNMILELNASDERGIDVVRDQIKTFASTRQIFSSGFKLVILDEADAMTNAAQNALRRIIEKYSAHTRFCILANYTHKLNPALLSRCTRFRFSPLKEDAIKHRLAHVIEQESVDLSPEAFQSLLHLSSGDMRRALNVLQACYASVDAGEQISEELVYDCVGSPRPADIRTVLQAVLDGSWESALHTFSYIKQSKGLALADMLTAFAVEFQKLDLQNKTRIALLDGLSEIEWRLSSGGNESIQTSATIGVIKQSMELEASS.

57–64 lines the ATP pocket; sequence GPPGTGKT.

It belongs to the activator 1 small subunits family. In terms of assembly, heteropentamer of subunits RFC1, RFC2, RFC3, RFC4 and RFC5 that forms a complex with PCNA in the presence of ATP.

It localises to the nucleus. Its function is as follows. The elongation of primed DNA templates by DNA polymerase delta and epsilon requires the action of the accessory proteins proliferating cell nuclear antigen (PCNA) and activator 1. Subunit 3 binds ATP. In Blastobotrys adeninivorans (Yeast), this protein is Replication factor C subunit 3 (RFC3).